Reading from the N-terminus, the 301-residue chain is ATP synthase gamma chain (301 aa).

Belongs to the ATPase gamma chain family. As to quaternary structure, F-type ATPases have 2 components, CF(1) - the catalytic core - and CF(0) - the membrane proton channel. CF(1) has five subunits: alpha(3), beta(3), gamma(1), delta(1), epsilon(1). CF(0) has three main subunits: a, b and c.

It is found in the cell inner membrane. Functionally, produces ATP from ADP in the presence of a proton gradient across the membrane. The gamma chain is believed to be important in regulating ATPase activity and the flow of protons through the CF(0) complex. This Helicobacter pylori (strain Shi470) protein is ATP synthase gamma chain.